Consider the following 360-residue polypeptide: MSAEASPANLSAKAAGRLPVALDAMGGDHGLTPNVDGAVQAARSGVSVLLVGDRVKLHAELGKHEGSSRLPIEVVDAPDVIGMEEHASDVRSRTGASINVCTRLVKEGRAAAAVSMGHSGATMASALLTLGRIKGVDRPAILAHLPAQGGFTTLLDAGANADVKPAYLAQWARLATVYLKVLEDRDNPTVGLLSIGEEDHKGSQQVVEAHTLLRALDGQGITFYGNVEGRDIFRSTTDIVVTDGFTGNVVLKLAEGEARVLLGWVKEALNSNVKSKLGGLLVRDSLRGLAERMDPSTLRREHLDRGAGAGLYRPRQRRRPRRQKRRAACRPRPRSAAGRAPGSGVRGAAGLRTAEPPGSL.

Basic and acidic residues predominate over residues 296-305 (STLRREHLDR). Positions 296 to 360 (STLRREHLDR…LRTAEPPGSL (65 aa)) are disordered. Positions 314–333 (PRQRRRPRRQKRRAACRPRP) are enriched in basic residues. Residues 334-350 (RSAAGRAPGSGVRGAAG) are compositionally biased toward low complexity.

Belongs to the PlsX family. Homodimer. Probably interacts with PlsY.

It localises to the cytoplasm. It catalyses the reaction a fatty acyl-[ACP] + phosphate = an acyl phosphate + holo-[ACP]. Its pathway is lipid metabolism; phospholipid metabolism. Catalyzes the reversible formation of acyl-phosphate (acyl-PO(4)) from acyl-[acyl-carrier-protein] (acyl-ACP). This enzyme utilizes acyl-ACP as fatty acyl donor, but not acyl-CoA. The sequence is that of Phosphate acyltransferase from Deinococcus radiodurans (strain ATCC 13939 / DSM 20539 / JCM 16871 / CCUG 27074 / LMG 4051 / NBRC 15346 / NCIMB 9279 / VKM B-1422 / R1).